Consider the following 102-residue polypeptide: ATP-dependent Clp protease adapter protein ClpS (102 aa).

The protein belongs to the ClpS family. Binds to the N-terminal domain of the chaperone ClpA.

Functionally, involved in the modulation of the specificity of the ClpAP-mediated ATP-dependent protein degradation. The sequence is that of ATP-dependent Clp protease adapter protein ClpS from Nitrosospira multiformis (strain ATCC 25196 / NCIMB 11849 / C 71).